The primary structure comprises 170 residues: 4-hydroxyphenylacetate 3-monooxygenase reductase component (170 aa).

The protein belongs to the non-flavoprotein flavin reductase family. HpaC subfamily. Monomer. HPA 3-hydroxylase consists of a reductase component HpaC and an oxygenase component HpaB. Some form of interactions between the reductase and the oxygenase facilitate the transfer of FADH(-) to the oxygenase in P.aeruginosa, although interactions are not required in other species.

It carries out the reaction FADH2 + NAD(+) = FAD + NADH + 2 H(+). Its pathway is aromatic compound metabolism; 4-hydroxyphenylacetate degradation; pyruvate and succinate semialdehyde from 4-hydroxyphenylacetate: step 1/7. Its activity is regulated as follows. The rate of FAD reduction is independent of the presence of HPA, demonstrating that, in contrast to HPAH from A.baumannii, the activity of the HPAH reductase is not allosterically regulated by the substrate. Its function is as follows. Reductase component of the 4-hydroxyphenylacetate (HPA) 3-hydroxylase. Catalyzes the reduction of FAD by NADH. The reduced flavin is then transferred to the oxygenase component HpaB. Is also able to reduce FMN and riboflavin, but preferentially binds FAD. Has no activity with NADPH as the reductant. The protein is 4-hydroxyphenylacetate 3-monooxygenase reductase component of Pseudomonas aeruginosa (strain ATCC 15692 / DSM 22644 / CIP 104116 / JCM 14847 / LMG 12228 / 1C / PRS 101 / PAO1).